Reading from the N-terminus, the 242-residue chain is Required for respiratory growth protein 7, mitochondrial (242 aa).

It belongs to the RRG7 family.

It localises to the mitochondrion. This is Required for respiratory growth protein 7, mitochondrial (RRG7) from Saccharomyces cerevisiae (strain ATCC 204508 / S288c) (Baker's yeast).